Here is a 351-residue protein sequence, read N- to C-terminus: Glycerol-1-phosphate dehydrogenase [NAD(P)+] (351 aa).

NAD(+) contacts are provided by residues 97-101 (GTVID) and 119-122 (TSPS). A substrate-binding site is contributed by aspartate 124. Residue serine 128 coordinates NAD(+). Aspartate 171 is a binding site for substrate. Aspartate 171 and histidine 251 together coordinate Zn(2+). Histidine 255 contributes to the substrate binding site. Position 267 (histidine 267) interacts with Zn(2+).

It belongs to the glycerol-1-phosphate dehydrogenase family. As to quaternary structure, homodimer. Requires Zn(2+) as cofactor.

Its subcellular location is the cytoplasm. It carries out the reaction sn-glycerol 1-phosphate + NAD(+) = dihydroxyacetone phosphate + NADH + H(+). It catalyses the reaction sn-glycerol 1-phosphate + NADP(+) = dihydroxyacetone phosphate + NADPH + H(+). It participates in membrane lipid metabolism; glycerophospholipid metabolism. Functionally, catalyzes the NAD(P)H-dependent reduction of dihydroxyacetonephosphate (DHAP or glycerone phosphate) to glycerol 1-phosphate (G1P). The G1P thus generated is used as the glycerophosphate backbone of phospholipids in the cellular membranes of Archaea. In Sulfolobus acidocaldarius (strain ATCC 33909 / DSM 639 / JCM 8929 / NBRC 15157 / NCIMB 11770), this protein is Glycerol-1-phosphate dehydrogenase [NAD(P)+].